A 411-amino-acid chain; its full sequence is Glutamyl-tRNA reductase (411 aa).

Substrate-binding positions include 48–51, S106, 111–113, and Q117; these read TCNR and EDQ. Catalysis depends on C49, which acts as the Nucleophile. Residue 186–191 coordinates NADP(+); the sequence is GAGDMG.

Belongs to the glutamyl-tRNA reductase family. As to quaternary structure, homodimer.

The enzyme catalyses (S)-4-amino-5-oxopentanoate + tRNA(Glu) + NADP(+) = L-glutamyl-tRNA(Glu) + NADPH + H(+). It functions in the pathway porphyrin-containing compound metabolism; protoporphyrin-IX biosynthesis; 5-aminolevulinate from L-glutamyl-tRNA(Glu): step 1/2. In terms of biological role, catalyzes the NADPH-dependent reduction of glutamyl-tRNA(Glu) to glutamate 1-semialdehyde (GSA). In Clostridium novyi (strain NT), this protein is Glutamyl-tRNA reductase.